Consider the following 139-residue polypeptide: Putative nickel-responsive regulator (139 aa).

Ni(2+) is bound by residues H77, H88, H90, and C96.

The protein belongs to the transcriptional regulatory CopG/NikR family. Requires Ni(2+) as cofactor.

In terms of biological role, transcriptional regulator. The polypeptide is Putative nickel-responsive regulator (Haloarcula marismortui (strain ATCC 43049 / DSM 3752 / JCM 8966 / VKM B-1809) (Halobacterium marismortui)).